The following is a 1857-amino-acid chain: Peripheral-type benzodiazepine receptor-associated protein 1 (1857 aa).

Disordered stretches follow at residues 1–103, 284–321, and 565–629; these read MEQL…RPED, QRET…QEDA, and PKDL…DTAS. The segment covering 55 to 67 has biased composition (basic and acidic residues); the sequence is LRSEESSKPKGDG. The span at 87–96 shows a compositional bias: polar residues; that stretch reads LGQQASSSGP. Residues 289-298 are compositionally biased toward pro residues; the sequence is PLPPSWPPGP. 2 stretches are compositionally biased toward low complexity: residues 299 to 316 and 603 to 616; these read ALQA…GEAT and SLSN…IHNS. The 68-residue stretch at 653-720 folds into the SH3 1 domain; it reads ARIQVFLARY…PSNFVERVSD (68 aa). The interval 729–789 is disordered; the sequence is PELADLSHSS…PSPEGLGEPP (61 aa). Residues 755 to 764 show a composition bias toward low complexity; sequence GGQSSVGRSQ. 3 Fibronectin type-III domains span residues 791-882, 884-976, and 981-1081; these read VPYP…ARAG, VPSQ…TLPA, and APLD…LAPA. 3 disordered regions span residues 1083 to 1311, 1330 to 1479, and 1501 to 1601; these read LPAR…SDEE, FSIP…CSRG, and YDSE…RGVR. Over residues 1098–1116 the composition is skewed to low complexity; that stretch reads ARAPLASASPGPGDPSSPL. Over residues 1138-1147 the composition is skewed to basic and acidic residues; sequence EMAKGSHEDP. A compositionally biased stretch (polar residues) spans 1201-1218; that stretch reads ASSSTQGARAQQAPNTEM. Residues 1259 to 1274 show a composition bias toward acidic residues; that stretch reads DIQEEEEEEEEEEEEE. Residues 1278–1292 are compositionally biased toward polar residues; the sequence is RTCSFQKQVAGNSIR. Acidic residues predominate over residues 1333–1346; that stretch reads PEEEEEEEEDEEEE. 2 stretches are compositionally biased toward basic and acidic residues: residues 1420 to 1429 and 1554 to 1586; these read RPPDPREHCS and AWEK…EARG. Positions 1625 to 1693 constitute an SH3 2 domain; sequence LPVRIFVALF…PCNMVAEVAV (69 aa). Disordered stretches follow at residues 1723 to 1761 and 1823 to 1857; these read VYST…VPSA and SNFL…RVQC. An SH3 3 domain is found at 1764 to 1831; the sequence is KAPHSMVAAF…PSNFLEGPGP (68 aa).

It belongs to the RIMBP family. In terms of assembly, interacts with RIMS1 and RIMS2. Interacts with TSPO. Interacts with CACNA1A. As to expression, predominantly expressed in brain, pituitary gland and thymus in adults. In adult brain, highest expression found in temporal lobe and the putamen, followed by amygdala, caudate nucleus, cerebral cortex, occipital and frontal lobe. A high expression level is also observed in fetal tissues like brain, heart, kidney and thymus.

The protein localises to the cytoplasm. It is found in the mitochondrion. Functionally, required for synaptic transmission regulation. It probably controls the recruitement of voltage-gated calcium channels to the presynaptic membrane, and modulates neurotransmitter release. This is Peripheral-type benzodiazepine receptor-associated protein 1 from Homo sapiens (Human).